The sequence spans 368 residues: Ribosomal RNA large subunit methyltransferase M (368 aa).

Residues Ser189, 222 to 225 (CPGG), Asp241, Asp261, and Asp278 each bind S-adenosyl-L-methionine. Lys307 serves as the catalytic Proton acceptor.

The protein belongs to the class I-like SAM-binding methyltransferase superfamily. RNA methyltransferase RlmE family. RlmM subfamily. Monomer.

Its subcellular location is the cytoplasm. It catalyses the reaction cytidine(2498) in 23S rRNA + S-adenosyl-L-methionine = 2'-O-methylcytidine(2498) in 23S rRNA + S-adenosyl-L-homocysteine + H(+). Its function is as follows. Catalyzes the 2'-O-methylation at nucleotide C2498 in 23S rRNA. This is Ribosomal RNA large subunit methyltransferase M from Yersinia enterocolitica serotype O:8 / biotype 1B (strain NCTC 13174 / 8081).